The following is a 92-amino-acid chain: Phospholemman (92 aa).

A signal peptide spans 1 to 20 (MAPLHHILVLCVGFLTTATA). Residues 21 to 35 (EAPQEHDPFTYDYQS) are Extracellular-facing. Residues 36–56 (LRIGGLIIAGILFILGILIVL) traverse the membrane as a helical segment. The Cytoplasmic portion of the chain corresponds to 57–92 (SRRCRCKFNQQQRTGEPDEEEGTFRSSIRRLSTRRR). Residue cysteine 60 is the site of S-palmitoyl cysteine attachment. Cysteine 62 carries the S-glutathionyl cysteine; alternate modification. Cysteine 62 carries S-palmitoyl cysteine; alternate lipidation. The disordered stretch occupies residues 65–92 (NQQQRTGEPDEEEGTFRSSIRRLSTRRR). Threonine 79 is subject to Phosphothreonine. The residue at position 82 (serine 82) is a Phosphoserine. Phosphoserine; by PKA and PKC occurs at positions 83 and 88. The segment covering 83–92 (SIRRLSTRRR) has biased composition (basic residues). Phosphothreonine; by PKC is present on threonine 89.

It belongs to the FXYD family. Homotetramer. Monomer. Regulatory subunit of the sodium/potassium-transporting ATPase (NKA) which is composed of a catalytic alpha subunit, a non-catalytic beta subunit and an additional regulatory subunit. The monomeric form associates with NKA while the oligomeric form does not. Interacts with the catalytic alpha-1 subunit ATP1A1. Also interacts with the catalytic alpha-2 and alpha-3 subunits ATP1A2 and ATP1A3. Very little interaction with the alpha subunits ATP1A1, ATP1A2 or ATP1A3 when phosphorylated at Ser-83. Interacts with non-catalytic beta-1 subunit ATP1B1. Oxidative stress decreases interaction with ATP1A1 but increases interaction with ATP1B1. Post-translationally, major plasma membrane substrate for cAMP-dependent protein kinase (PKA) and protein kinase C (PKC) in several different tissues. Phosphorylated in response to insulin and adrenergic stimulation. Phosphorylation at Ser-88 stimulates sodium/potassium-transporting ATPase activity while the unphosphorylated form inhibits sodium/potassium-transporting ATPase activity. Phosphorylation increases tetramerization, decreases binding to ATP1A1 and reduces inhibition of ATP1A1 activity. Phosphorylation at Ser-83 leads to greatly reduced interaction with ATP1A1, ATP1A2 and ATP1A3. May be phosphorylated by DMPK. Palmitoylation increases half-life and stability and is enhanced upon phosphorylation at Ser-88 by PKA. As to expression, present in heart, esophagus, stomach, aorta, skeletal muscle, smooth muscle, and liver but absent from brain and kidney.

Its subcellular location is the cell membrane. The protein localises to the sarcolemma. It localises to the apical cell membrane. It is found in the membrane. The protein resides in the caveola. Its subcellular location is the T-tubule. In terms of biological role, associates with and regulates the activity of the sodium/potassium-transporting ATPase (NKA) which transports Na(+) out of the cell and K(+) into the cell. Inhibits NKA activity in its unphosphorylated state and stimulates activity when phosphorylated. Reduces glutathionylation of the NKA beta-1 subunit ATP1B1, thus reversing glutathionylation-mediated inhibition of ATP1B1. Contributes to female sexual development by maintaining the excitability of neurons which secrete gonadotropin-releasing hormone. This is Phospholemman from Canis lupus familiaris (Dog).